The chain runs to 439 residues: Glutamine synthetase (439 aa).

In terms of domain architecture, GS beta-grasp spans 12 to 93; it reads SKIKFVQLVF…VYGFIYKDNK (82 aa). The GS catalytic domain maps to 99–439; sequence PRGILKRALE…EWELERYFFL (341 aa). Residues glutamate 122 and glutamate 124 each coordinate Mg(2+). Glutamate 172 serves as a coordination point for ATP. Residues glutamate 177 and glutamate 184 each contribute to the Mg(2+) site. Residue glycine 229 participates in L-glutamate binding. Histidine 233 provides a ligand contact to Mg(2+). Residues 235-237 and serine 237 contribute to the ATP site; that span reads HIS. L-glutamate contacts are provided by arginine 283, glutamate 289, and arginine 301. Residues arginine 301, arginine 306, and lysine 313 each coordinate ATP. A Mg(2+)-binding site is contributed by glutamate 318. L-glutamate is bound at residue arginine 320.

The protein belongs to the glutamine synthetase family. Oligomer of 12 subunits arranged in the form of two hexagons. Requires Mg(2+) as cofactor.

Its subcellular location is the cytoplasm. It carries out the reaction L-glutamate + NH4(+) + ATP = L-glutamine + ADP + phosphate + H(+). Probably involved in nitrogen metabolism via ammonium assimilation. Catalyzes the ATP-dependent biosynthesis of glutamine from glutamate and ammonia. This Pyrococcus furiosus (strain ATCC 43587 / DSM 3638 / JCM 8422 / Vc1) protein is Glutamine synthetase.